A 145-amino-acid chain; its full sequence is Functional amyloid chaperone FapA (145 aa).

The N-terminal stretch at 1–27 is a signal peptide; that stretch reads MRKRDKRLYHLLLVGCVLGSLSLTAQA.

This sequence belongs to the FapA family. In terms of assembly, monomer in solution. Interacts with FapC but not FapB in vitro.

It is found in the periplasm. Functionally, an intrinsically disordered chaperone for fibril amyloid FapC that guards against fibrillation, pro within the periplasm. Upon overexpression of the endogenous six-gene locus (fapA-fapF), cells form large clumps during liquid growth, make large amounts of biofilm and produce relatively unstable amyloid fibrils. The protein is Functional amyloid chaperone FapA of Pseudomonas putida (strain ATCC 700007 / DSM 6899 / JCM 31910 / BCRC 17059 / LMG 24140 / F1).